We begin with the raw amino-acid sequence, 158 residues long: Transcriptional repressor NrdR (158 aa).

The tract at residues 1–22 (MRCPFCGSDDTQVKDSRPAEDN) is disordered. A zinc finger spans residues 3-34 (CPFCGSDDTQVKDSRPAEDNSAIRRRRICPDC). Residues 11 to 22 (TQVKDSRPAEDN) are compositionally biased toward basic and acidic residues. The region spanning 49-139 (LTVLKKTGRK…VYRDFSHAED (91 aa)) is the ATP-cone domain.

It belongs to the NrdR family. Zn(2+) serves as cofactor.

Its function is as follows. Negatively regulates transcription of bacterial ribonucleotide reductase nrd genes and operons by binding to NrdR-boxes. This is Transcriptional repressor NrdR from Allorhizobium ampelinum (strain ATCC BAA-846 / DSM 112012 / S4) (Agrobacterium vitis (strain S4)).